A 1070-amino-acid polypeptide reads, in one-letter code: Carbamoyl phosphate synthase large chain (1070 aa).

The segment at 1-401 (MPKRDDIKTI…ALLKAVRSLE (401 aa)) is carboxyphosphate synthetic domain. Positions 129, 169, 175, 176, 208, 210, 215, 241, 242, 243, 284, and 298 each coordinate ATP. Positions 133 to 327 (RDLMNELGEP…IAKLAAKIAV (195 aa)) constitute an ATP-grasp 1 domain. 3 residues coordinate Mg(2+): Gln-284, Glu-298, and Asn-300. Gln-284, Glu-298, and Asn-300 together coordinate Mn(2+). The tract at residues 402-546 (IGADHLLLEE…YSTYEDENES (145 aa)) is oligomerization domain. The tract at residues 547–929 (IRSSKESVIV…ALYKGFVASG (383 aa)) is carbamoyl phosphate synthetic domain. In terms of domain architecture, ATP-grasp 2 spans 671 to 861 (EKALEILQIP…MANVATRVIL (191 aa)). ATP-binding residues include Arg-707, Arg-746, Val-748, Glu-752, Gly-777, Val-778, His-779, Ser-780, Gln-820, and Glu-832. Gln-820, Glu-832, and Asn-834 together coordinate Mg(2+). Mn(2+) is bound by residues Gln-820, Glu-832, and Asn-834. Residues 930–1070 (TTMHDYGTVL…SEVKQPKARV (141 aa)) form the MGS-like domain. The segment at 930-1070 (TTMHDYGTVL…SEVKQPKARV (141 aa)) is allosteric domain.

Belongs to the CarB family. In terms of assembly, composed of two chains; the small (or glutamine) chain promotes the hydrolysis of glutamine to ammonia, which is used by the large (or ammonia) chain to synthesize carbamoyl phosphate. Tetramer of heterodimers (alpha,beta)4. It depends on Mg(2+) as a cofactor. Mn(2+) is required as a cofactor.

The enzyme catalyses hydrogencarbonate + L-glutamine + 2 ATP + H2O = carbamoyl phosphate + L-glutamate + 2 ADP + phosphate + 2 H(+). It catalyses the reaction hydrogencarbonate + NH4(+) + 2 ATP = carbamoyl phosphate + 2 ADP + phosphate + 2 H(+). It functions in the pathway amino-acid biosynthesis; L-arginine biosynthesis; carbamoyl phosphate from bicarbonate: step 1/1. The protein operates within pyrimidine metabolism; UMP biosynthesis via de novo pathway; (S)-dihydroorotate from bicarbonate: step 1/3. Its function is as follows. Large subunit of the glutamine-dependent carbamoyl phosphate synthetase (CPSase). CPSase catalyzes the formation of carbamoyl phosphate from the ammonia moiety of glutamine, carbonate, and phosphate donated by ATP, constituting the first step of 2 biosynthetic pathways, one leading to arginine and/or urea and the other to pyrimidine nucleotides. The large subunit (synthetase) binds the substrates ammonia (free or transferred from glutamine from the small subunit), hydrogencarbonate and ATP and carries out an ATP-coupled ligase reaction, activating hydrogencarbonate by forming carboxy phosphate which reacts with ammonia to form carbamoyl phosphate. This is Carbamoyl phosphate synthase large chain from Listeria innocua serovar 6a (strain ATCC BAA-680 / CLIP 11262).